A 378-amino-acid chain; its full sequence is MEILWFIPTHGDGRYLGTQTGGRTADHLYFKQVAQAADRLGYTGVLLPTGRSCEDPWLTAAALAGETSDLKFLVAVRPGLMQPSVAARMASTMDRLSDGRLLVNVVAGGDPYELAGDGMFISHDERYKATEEFLTVWRGLMRGETVTYEGDHIKVENSNLLFPPKQSPHPPLYFGGSSQAGIEAAAKHTDVYLTWGEPPEQVKEKIETVKKQAAKEGRTMRFGIRLHVIVRETEEEAWEAAERLISHLDEETIAKAQAALRRADSSGQKRMAGLHNGDRSKLEISPNLWAGIGLVRGGAGTALVGDPQTVATRILEYQALGIESFIFSGYPHLEEAYYLAELVFPLLPFQNERTKKLERRLGEAMGNDHFARGKKAKV.

The protein belongs to the SsuD family.

It catalyses the reaction an alkanesulfonate + FMNH2 + O2 = an aldehyde + FMN + sulfite + H2O + 2 H(+). Functionally, catalyzes the desulfonation of aliphatic sulfonates. This Bacillus velezensis (strain DSM 23117 / BGSC 10A6 / LMG 26770 / FZB42) (Bacillus amyloliquefaciens subsp. plantarum) protein is Alkanesulfonate monooxygenase.